The primary structure comprises 319 residues: Beta-ketoacyl-[acyl-carrier-protein] synthase III (319 aa).

Active-site residues include Cys110 and His246. The tract at residues 247–251 (QANYR) is ACP-binding. The active site involves Asn276.

The protein belongs to the thiolase-like superfamily. FabH family. Homodimer.

It localises to the cytoplasm. It catalyses the reaction malonyl-[ACP] + acetyl-CoA + H(+) = 3-oxobutanoyl-[ACP] + CO2 + CoA. Its pathway is lipid metabolism; fatty acid biosynthesis. In terms of biological role, catalyzes the condensation reaction of fatty acid synthesis by the addition to an acyl acceptor of two carbons from malonyl-ACP. Catalyzes the first condensation reaction which initiates fatty acid synthesis and may therefore play a role in governing the total rate of fatty acid production. Possesses both acetoacetyl-ACP synthase and acetyl transacylase activities. Its substrate specificity determines the biosynthesis of branched-chain and/or straight-chain of fatty acids. The protein is Beta-ketoacyl-[acyl-carrier-protein] synthase III of Lactobacillus delbrueckii subsp. bulgaricus (strain ATCC BAA-365 / Lb-18).